The sequence spans 685 residues: RING finger protein 145 (685 aa).

13 helical membrane-spanning segments follow: residues 53-73 (YIAL…LTLP), 77-97 (LVQL…HQLS), 123-143 (FTTA…VMQT), 151-171 (AHLL…IVFI), 174-194 (FAMI…LLVP), 225-245 (LVLP…QIYT), 275-295 (YSLL…LTLC), 316-336 (TEGI…LQVI), 340-360 (FLLS…MLEI), 384-404 (SLCL…CQFF), 410-430 (LLII…TLLI), 460-480 (LLEF…TLFG), and 482-502 (WTVM…WLRA). The segment at 537-575 (CSICFQDMKSAVITPCSHFFHAACLKKWLYVQETCPLCH) adopts an RING-type; atypical zinc-finger fold. A disordered region spans residues 582–685 (LQPTSSPGTP…VSTSDVNCAS (104 aa)). Residues 583–602 (QPTSSPGTPTQGTPAANQNP) show a composition bias toward low complexity. Basic and acidic residues predominate over residues 620–631 (EGIRAEEMKTSA).

Its subcellular location is the membrane. This is RING finger protein 145 (rnf145) from Danio rerio (Zebrafish).